The primary structure comprises 517 residues: Transcription factor MTB3 (517 aa).

Residues 290–331 (GNSSNGYRSDEGEGKLYKEELDERKPRKRGRKPANGREEALN) form a disordered region. Positions 297 to 314 (RSDEGEGKLYKEELDERK) are enriched in basic and acidic residues. Residues 327 to 340 (EEALNHVEAERQRR) are basic motif; degenerate. The region spanning 327 to 376 (EEALNHVEAERQRREKLNQRFYALRAVVPNISKMDKASLLGDAIAYITDL) is the bHLH domain. The tract at residues 341–376 (EKLNQRFYALRAVVPNISKMDKASLLGDAIAYITDL) is helix-loop-helix motif.

The protein localises to the nucleus. Its function is as follows. Transcription factor that negatively regulates jasmonate (JA) signaling. Negatively regulates JA-dependent response to wounding, JA-induced expression of defense genes, JA-dependent responses against herbivorous insects, and JA-dependent resistance against Botrytis cinerea infection. Plays a positive role in resistance against the bacterial pathogen Pseudomonas syringae pv tomato DC3000. This chain is Transcription factor MTB3, found in Solanum lycopersicum (Tomato).